Reading from the N-terminus, the 324-residue chain is Granaticin polyketide synthase bifunctional cyclase/dehydratase (324 aa).

The tract at residues 1–21 (MVQPAATPVSLPSPTVHRSEH) is disordered.

It participates in antibiotic biosynthesis; granaticin biosynthesis. In terms of biological role, is needed for correct cyclization of the oligoketide leading to isochromanequinone formation. The polypeptide is Granaticin polyketide synthase bifunctional cyclase/dehydratase (gra-orf4) (Streptomyces violaceoruber).